Reading from the N-terminus, the 721-residue chain is MSSAKGDKLAPRPPSYGSNQSATPTYSLPPHPSTTYPQRHQSPASHAAASTLAALASSPPASSSTASPHPPNVLPTPSSASTSYNARPSTTSTLNQSLYSSSASPAAKAATAGISPSGSPLRKEVHMSSTKQTPAASTSTLAKPASSSTTGTPTPSSASKESGSSKRKKATRACLHCQKAHLTCDDSRPCQRCVKKGLAESCMDGRRKKAKYLLDDDELEELRRQKEAKKAAKQAVQQKNAPSPQQRQSRPSQQDSAKSTPQNSDPSSEKASAVSSILDQVAGSIATPSSSGHGPSPHAHDYLSSNPFDSSNGGVDDTQASSNNGGALPFDLSFDPSTHNFGSEATSLEYSILSSMLNGTDLQLMGASGASPDLQASPAVGVMNGWNIASGELDAILNISMQQNQVPGAGGMDTVAATYSDTADMGVYADPQPNTGLQDVGGGDSALNALEVPSSQCTAKEEPILLSSGSGNGNGNGSGSGSGEAQQAGSNNQVDLGSSSQRSTSNEPVAADINRAIASRRVARQQQDTIWRARIAKTYRDNTAPFPYPEGYHFLIKYVTSKYEKQDVLRIVRALAIFRPSLIALQMPLTEEDEIFVERSFQRTMLEFEKLISFSGTPTVVWRRTCEICVVGAEFCMLTQWSKDQLMGRRIYEFMDKNSTLDYWENFAQHAFENTTQSVMTTCTLVKPDGKLVPCAWSFTIKRDIFDLPSLVVGNFLPILS.

Residues 1-10 are compositionally biased toward basic and acidic residues; it reads MSSAKGDKLA. Disordered stretches follow at residues 1-172, 196-331, and 464-509; these read MSSA…KATR, KGLA…LPFD, and ILLS…NEPV. The span at 16–26 shows a compositional bias: polar residues; it reads YGSNQSATPTY. The segment covering 42 to 67 has biased composition (low complexity); it reads SPASHAAASTLAALASSPPASSSTAS. The segment covering 75 to 88 has biased composition (polar residues); that stretch reads PTPSSASTSYNARP. A compositionally biased stretch (low complexity) spans 89 to 117; that stretch reads STTSTLNQSLYSSSASPAAKAATAGISPS. Polar residues predominate over residues 127–141; that stretch reads MSSTKQTPAASTSTL. Residues 142–162 are compositionally biased toward low complexity; the sequence is AKPASSSTTGTPTPSSASKES. The segment at residues 174–202 is a DNA-binding region (zn(2)-C6 fungal-type); that stretch reads CLHCQKAHLTCDDSRPCQRCVKKGLAESC. Positions 221 to 230 are enriched in basic and acidic residues; the sequence is ELRRQKEAKK. Positions 233–254 are enriched in low complexity; it reads KQAVQQKNAPSPQQRQSRPSQQ. Polar residues predominate over residues 255–278; it reads DSAKSTPQNSDPSSEKASAVSSIL. The segment covering 288–297 has biased composition (low complexity); it reads PSSSGHGPSP. Positions 303 to 325 are enriched in polar residues; it reads LSSNPFDSSNGGVDDTQASSNNG. Positions 470-482 are enriched in gly residues; the sequence is SGNGNGNGSGSGS. A compositionally biased stretch (polar residues) spans 484–507; the sequence is EAQQAGSNNQVDLGSSSQRSTSNE. The PAS domain occupies 606–673; it reads LEFEKLISFS…WENFAQHAFE (68 aa).

It belongs to the ERT1/acuK family.

It localises to the nucleus. Transcription factor which regulates nonfermentable carbon utilization. Activator of gluconeogenetic genes. The polypeptide is Transcription activator of gluconeogenesis ERT1 (ERT1) (Mycosarcoma maydis (Corn smut fungus)).